Here is a 250-residue protein sequence, read N- to C-terminus: 5'-nucleotidase SurE (250 aa).

Residues D8, D9, S39, and N95 each coordinate a divalent metal cation.

Belongs to the SurE nucleotidase family. Requires a divalent metal cation as cofactor.

Its subcellular location is the cytoplasm. It catalyses the reaction a ribonucleoside 5'-phosphate + H2O = a ribonucleoside + phosphate. In terms of biological role, nucleotidase that shows phosphatase activity on nucleoside 5'-monophosphates. This is 5'-nucleotidase SurE from Cupriavidus necator (strain ATCC 17699 / DSM 428 / KCTC 22496 / NCIMB 10442 / H16 / Stanier 337) (Ralstonia eutropha).